A 503-amino-acid chain; its full sequence is Lysine--tRNA ligase (503 aa).

Mg(2+)-binding residues include Glu-414 and Glu-421.

The protein belongs to the class-II aminoacyl-tRNA synthetase family. As to quaternary structure, homodimer. Requires Mg(2+) as cofactor.

The protein localises to the cytoplasm. It catalyses the reaction tRNA(Lys) + L-lysine + ATP = L-lysyl-tRNA(Lys) + AMP + diphosphate. This chain is Lysine--tRNA ligase, found in Laribacter hongkongensis (strain HLHK9).